We begin with the raw amino-acid sequence, 612 residues long: Phragmoplastin DRP1D (612 aa).

Met1 carries the post-translational modification N-acetylmethionine. A Dynamin-type G domain is found at 32 to 301 (WEALPSVAVV…LESVIRSRIP (270 aa)). The segment at 42–49 (GGQSSGKS) is G1 motif. 45-50 (SSGKSS) contacts GTP. Residues 68–70 (VTR) are G2 motif. The interval 143–146 (DLPG) is G3 motif. The segment at 212–215 (TKLD) is G4 motif. GTP-binding positions include 213–218 (KLDLMD) and 243–246 (NRSQ). Residues 242 to 245 (VNRS) are G5 motif. The region spanning 520–612 (FRKIASNVAA…DEIDAAVWVR (93 aa)) is the GED domain.

Belongs to the TRAFAC class dynamin-like GTPase superfamily. Dynamin/Fzo/YdjA family. Forms homodimer and may homooligomerize and heterooligomerize to form the phragmoplastin complex. Binds to PHIP1.

It localises to the cytoplasm. The protein resides in the cytoskeleton. It catalyses the reaction GTP + H2O = GDP + phosphate + H(+). Putative microtubule-associated force-producing protein. Has a GTPase activity. The chain is Phragmoplastin DRP1D from Arabidopsis thaliana (Mouse-ear cress).